Consider the following 86-residue polypeptide: RNA-binding protein Hfq (86 aa).

Residues 10-71 form the Sm domain; it reads DLFLNNARKE…VSTIQPGKYI (62 aa).

Belongs to the Hfq family. Homohexamer.

Functionally, RNA chaperone that binds small regulatory RNA (sRNAs) and mRNAs to facilitate mRNA translational regulation in response to envelope stress, environmental stress and changes in metabolite concentrations. Also binds with high specificity to tRNAs. The protein is RNA-binding protein Hfq of Clostridioides difficile (strain 630) (Peptoclostridium difficile).